The primary structure comprises 111 residues: Kalata-B7 (111 aa).

The N-terminal stretch at 1–28 (MAKFTNCLALCLLLAAVVGAFGVELSEA) is a signal peptide. Residues 29-75 (DKSAVVNEIAEKMALQEMLDGVDKLFLRKMKSSETTLTMFLKEMQLK) constitute a propeptide that is removed on maturation. Positions 76–104 (GLPVCGETCTLGTCYTQGCTCSWPICKRN) form a cross-link, cyclopeptide (Gly-Asn). Intrachain disulfides connect Cys-80/Cys-94, Cys-84/Cys-96, and Cys-89/Cys-101. A propeptide spanning residues 105-111 (GLPDVAA) is cleaved from the precursor.

Post-translationally, kalata-B7 is a cyclic peptide.

Functionally, probably participates in a plant defense mechanism. Has hemolytic activity. The polypeptide is Kalata-B7 (OAK3) (Oldenlandia affinis).